The sequence spans 95 residues: Ubiquinol-cytochrome-c reductase complex assembly factor 3 (95 aa).

The Mitochondrial matrix portion of the chain corresponds to 1–7; that stretch reads MTTLRKL. Residues 8–28 traverse the membrane as a helical segment; the sequence is LLVGALLGAGAGVGTALFALV. Positions 23–80 are mediates lipid-binding; sequence ALFALVTPGEERKQAMLKEMPEQYPQRRDEAARTKELLLATLQEAAATQENVAWRKNW. The Mitochondrial intermembrane segment spans residues 29 to 95; that stretch reads TPGEERKQAM…GGGGGGGRSA (67 aa).

The protein belongs to the UQCC3 family. Associates with the ubiquinol-cytochrome c reductase complex (mitochondrial respiratory chain complex III(CIII) or cytochrome b-c1 complex). Interacts with UQCC1. Forms a complex, named COMC, composed of UQCC1, UQCC2; UQCC3 and UQCC4; mediates MT-CYB hemylation and association with the first nuclear-encoded complex III subunit UQCRQ. Probably cleaved by OMA1 under mitochondrial stress conditions.

The protein localises to the mitochondrion inner membrane. In terms of biological role, required for the assembly of the ubiquinol-cytochrome c reductase complex (mitochondrial respiratory chain complex III or cytochrome b-c1 complex), mediating cytochrome b recruitment and probably stabilization within the complex. Thereby, plays an important role in ATP production by mitochondria. Cardiolipin-binding protein, it may also control the cardiolipin composition of mitochondria membranes and their morphology. This chain is Ubiquinol-cytochrome-c reductase complex assembly factor 3, found in Bos taurus (Bovine).